A 733-amino-acid chain; its full sequence is Wall-associated receptor kinase 5 (733 aa).

Positions 1 to 23 (MKVHSLFLMAIFFYLAYTQLVKA) are cleaved as a signal peptide. Residues 24 to 330 (QPRDDCQTRC…IDTPKEEPKY (307 aa)) are Extracellular-facing. N-linked (GlcNAc...) asparagine glycosylation is found at Asn57, Asn77, Asn110, Asn137, Asn184, Asn206, Asn218, Asn232, and Asn247. Residues 231 to 278 (GNQTCEQVVGRNICGGNSTCFDSTRGKGYNCKCLQGFDGNPYLSDGCQ) enclose the EGF-like 1 domain. Cystine bridges form between Cys235-Cys250, Cys244-Cys261, Cys263-Cys277, Cys283-Cys296, Cys290-Cys305, and Cys307-Cys320. An EGF-like 2; calcium-binding domain is found at 279 to 321 (DINECTTRIHNCSDTSTCENTLGSFHCQCPSGSDLNTTTMSCI). N-linked (GlcNAc...) asparagine glycosylation is present at Asn289. N-linked (GlcNAc...) asparagine glycosylation occurs at Asn314. A helical transmembrane segment spans residues 331–351 (LGWTTVLLGTTIGFLIILLTI). At 352 to 733 (SYIQQKMRHR…VTRLDIETGR (382 aa)) the chain is on the cytoplasmic side. Thr397 carries the post-translational modification Phosphothreonine. Residues 408 to 691 (YNESRILGQG…RVKTTKHQWS (284 aa)) enclose the Protein kinase domain. ATP is bound by residues 414-422 (LGQGGQGTV) and Lys436. Tyr481 is modified (phosphotyrosine). The active-site Proton acceptor is the Asp533. Phosphothreonine is present on residues Thr567 and Thr572. Tyr580 is subject to Phosphotyrosine.

This sequence belongs to the protein kinase superfamily. Ser/Thr protein kinase family. Predominantly expressed in green tissues such as stems and leaves.

It localises to the membrane. The enzyme catalyses L-seryl-[protein] + ATP = O-phospho-L-seryl-[protein] + ADP + H(+). It carries out the reaction L-threonyl-[protein] + ATP = O-phospho-L-threonyl-[protein] + ADP + H(+). Serine/threonine-protein kinase that may function as a signaling receptor of extracellular matrix component. Binding to pectin may have significance in the control of cell expansion, morphogenesis and development. The protein is Wall-associated receptor kinase 5 (WAK5) of Arabidopsis thaliana (Mouse-ear cress).